We begin with the raw amino-acid sequence, 312 residues long: Formimidoylglutamase (312 aa).

Positions 128, 153, 155, 157, 240, and 242 each coordinate Mn(2+).

This sequence belongs to the arginase family. It depends on Mn(2+) as a cofactor.

It carries out the reaction N-formimidoyl-L-glutamate + H2O = formamide + L-glutamate. It functions in the pathway amino-acid degradation; L-histidine degradation into L-glutamate; L-glutamate from N-formimidoyl-L-glutamate (hydrolase route): step 1/1. Its function is as follows. Catalyzes the conversion of N-formimidoyl-L-glutamate to L-glutamate and formamide. This is Formimidoylglutamase from Enterobacter sp. (strain 638).